The sequence spans 147 residues: MYPAHLLILSAVCVSLLGAANIPPHPLNLINFMNMIRYTIPCEKTWGEYTNYGCYCGAGGSGTPIDALDRCCYVHDNCYGDAEKIHKCSPKTQSYSYKLTRRTIICYGAAGTCARIVCDCDRTAALCFGDSEYIEGHKRIDTKRYCQ.

An N-terminal signal peptide occupies residues 1–19 (MYPAHLLILSAVCVSLLGA). The propeptide occupies 20–27 (ANIPPHPL). Disulfide bonds link Cys54/Cys146, Cys56/Cys72, Cys71/Cys127, Cys78/Cys120, Cys88/Cys113, and Cys106/Cys118. Positions 55, 57, and 59 each coordinate Ca(2+). His75 is a catalytic residue. Asp76 lines the Ca(2+) pocket. Residue Asp121 is part of the active site.

It belongs to the phospholipase A2 family. Group I subfamily. D49 sub-subfamily. As to quaternary structure, heterodimer; disulfide-linked. The A chains have phospholipase A2 activity and the B chains show homology with the basic protease inhibitors. Requires Ca(2+) as cofactor. As to expression, expressed by the venom gland.

It is found in the secreted. The catalysed reaction is a 1,2-diacyl-sn-glycero-3-phosphocholine + H2O = a 1-acyl-sn-glycero-3-phosphocholine + a fatty acid + H(+). Functionally, snake venom phospholipase A2 (PLA2) that inhibits neuromuscular transmission by blocking acetylcholine release from the nerve termini. PLA2 catalyzes the calcium-dependent hydrolysis of the 2-acyl groups in 3-sn-phosphoglycerides. This chain is Basic phospholipase A2 beta-bungarotoxin A1 chain, found in Bungarus caeruleus (Indian krait).